Reading from the N-terminus, the 350-residue chain is MSSTAASSTVGGGGSSEISGVKKTSKRPKYSRFTQQELPACKPILTPRWVILTFLVAGVVFIPLGVICLFASQGVVEIVDRYDTDCIPTSSRNNMVAYIQGEGDKICKRTITVTKAMKHPVYVYYQLENFYQNHRRYVKSRNDAQLRSPKEEHDVKTCAPEDNVGGEPIVPCGLVAWSLFNDTYSFSRNSQQLLVNKKGISWKSDRENKFGKNVFPKNFQKGAPIGGGTLNISKPLSEQEDLIVWMRTAALPTFRKLYGKIETDLHAGDTITVLLQNNYNTYSFNGQKKLVLSTTSWLGGRNDFLGIAYLTVGSICLFLAVTFAVLYLVKPRQLGDPSYLSWNRSAGGLQ.

Residues 1–23 (MSSTAASSTVGGGGSSEISGVKK) are disordered. At Ser-2 the chain carries N-acetylserine. The chain crosses the membrane as a helical span at residues 50-70 (VILTFLVAGVVFIPLGVICLF). 2 N-linked (GlcNAc...) asparagine glycosylation sites follow: Asn-181 and Asn-231. Residues 304-324 (FLGIAYLTVGSICLFLAVTFA) traverse the membrane as a helical segment.

It belongs to the CDC50/LEM3 family. Interacts with ALA2 and ALA3 in a heterologous system. As to expression, expressed in roots, leaves, stems, flowers and siliques.

It is found in the golgi apparatus membrane. The protein localises to the prevacuolar compartment membrane. It localises to the endoplasmic reticulum membrane. In terms of biological role, required for the lipid transport activity of the ALA/ALIS P4-ATPase complex. This Arabidopsis thaliana (Mouse-ear cress) protein is ALA-interacting subunit 5 (ALIS5).